The chain runs to 1051 residues: Ubiquitin-activating enzyme E1 1 (1051 aa).

2 repeat units span residues 56–194 (GRET…GSVF) and 453–605 (GSKL…QMVI). The segment at 56-605 (GRETMKRLFG…GAKCNTQMVI (550 aa)) is 2 approximate repeats. ATP is bound by residues Ala-472, Asp-498, Arg-509, Lys-522, and 570–571 (DN). Residue Cys-626 is the Glycyl thioester intermediate of the active site.

This sequence belongs to the ubiquitin-activating E1 family. Monomer. The N-terminus is blocked.

It catalyses the reaction ATP + ubiquitin + [E1 ubiquitin-activating enzyme]-L-cysteine = AMP + diphosphate + S-ubiquitinyl-[E1 ubiquitin-activating enzyme]-L-cysteine.. It participates in protein modification; protein ubiquitination. In terms of biological role, activates ubiquitin by first adenylating its C-terminal glycine residue with ATP, and thereafter linking this residue to the side chain of a cysteine residue in E1, yielding a ubiquitin-E1 thioester and free AMP. This is Ubiquitin-activating enzyme E1 1 from Triticum aestivum (Wheat).